Here is a 398-residue protein sequence, read N- to C-terminus: MSKTIAINAGSSSLKWQLYQMPEEAVLAQGIIERIGLKDSISTVKYDGKKEEQILDIHDHTEAVKILLNDLIHFGIIAAYDEITGVGHRVVAGGELFKESVVVNDKVLEQIEELSVLAPLHNPGAAAGIRAFRDILPDITSVCVFDTSFHTSMAKHTYLYPIPQKYYTDYKVRKYGAHGTSHKYVAQEAAKMLGRPLEELKLITAHIGNGVSITANYHGKSVDTSMGFTPLAGPMMGTRSGDIDPAIIPYLIEQDPELKDAADVVNMLNKKSGLSGVSGISSDMRDIEAGLQEDNPDAVLAYNIFIDRIKKCIGQYFAVLNGADALVFTAGMGENAPLMRQDVIGGLTWFGMDIDPEKNVFGYRGDISTPESKVKVLVISTDEELCIARDVERLKNTK.

Residue Asn8 participates in Mg(2+) binding. An ATP-binding site is contributed by Lys15. Arg89 serves as a coordination point for substrate. The Proton donor/acceptor role is filled by Asp146. ATP is bound by residues 206–210, 283–285, and 331–335; these read HIGNG, DMR, and GMGEN. Glu383 is a binding site for Mg(2+).

It belongs to the acetokinase family. As to quaternary structure, homodimer. It depends on Mg(2+) as a cofactor. The cofactor is Mn(2+).

It localises to the cytoplasm. The enzyme catalyses acetate + ATP = acetyl phosphate + ADP. It participates in metabolic intermediate biosynthesis; acetyl-CoA biosynthesis; acetyl-CoA from acetate: step 1/2. Its function is as follows. Catalyzes the formation of acetyl phosphate from acetate and ATP. Can also catalyze the reverse reaction. This Streptococcus pyogenes serotype M1 protein is Acetate kinase.